We begin with the raw amino-acid sequence, 382 residues long: Alanine racemase 1 (382 aa).

The active-site Proton acceptor; specific for D-alanine is Lys-39. Lys-39 carries the N6-(pyridoxal phosphate)lysine modification. Residue Arg-138 participates in substrate binding. Catalysis depends on Tyr-265, which acts as the Proton acceptor; specific for L-alanine. Residue Met-312 coordinates substrate.

This sequence belongs to the alanine racemase family. Requires pyridoxal 5'-phosphate as cofactor.

It carries out the reaction L-alanine = D-alanine. It participates in amino-acid biosynthesis; D-alanine biosynthesis; D-alanine from L-alanine: step 1/1. Functionally, catalyzes the interconversion of L-alanine and D-alanine. May also act on other amino acids. The sequence is that of Alanine racemase 1 (alr1) from Staphylococcus aureus (strain MRSA252).